The following is a 1110-amino-acid chain: Envelopment polyprotein (1110 aa).

The propeptide occupies 1-8 (MALKETDA). Topologically, residues 1 to 290 (MALKETDAKI…KYSKNIYKQT (290 aa)) are lumenal. A Cell attachment site motif is present at residues 14-16 (RGD). Residues Asn46 and Asn92 are each glycosylated (N-linked (GlcNAc...) asparagine; by host). Cystine bridges form between Cys90/Cys121 and Cys98/Cys132. The non-covalent dimerization stretch occupies residues 153–171 (IDNKRKLSIGTKFYIIESL). Asn186 carries N-linked (GlcNAc...) asparagine; by host glycosylation. The cysteines at positions 200 and 261 are disulfide-linked. The chain crosses the membrane as a helical span at residues 291 to 342 (ACINFSWFRLIMIALIVYFPIRYLVNKTSKTLFYGYDLLGLITYPILLLINY). The Cytoplasmic segment spans residues 343-459 (LWSYFPLKCK…VPGCDRFVTN (117 aa)). At 460–1044 (RYDKCPEKDQ…HFGSFFDTVR (585 aa)) the chain is on the lumenal side. 3 N-linked (GlcNAc...) asparagine; by host glycosylation sites follow: Asn566, Asn582, and Asn957. A helical membrane pass occupies residues 1045-1065 (VVLLILFVFALAYLCSIVATM). At 1066 to 1110 (CRGYVRNKSYKTKYIEDTNDYSLVSTSSGKDTITRRRPPLDFSGI) the chain is on the cytoplasmic side. The interval 1091 to 1110 (TSSGKDTITRRRPPLDFSGI) is disordered.

Belongs to the tospovirus envelope glycoprotein family. In terms of assembly, homodimer; disulfide-linked. Heterodimer with Glycoprotein C. Interacts with nucleoprotein. Heterodimer with Glycoprotein N. Interacts with nucleoprotein. Specific enzymatic cleavages in vivo yield mature proteins including Glycoprotein N and Glycoprotein C. Post-translationally, glycosylated with O-linked glycans. Glycosylation is essential for proper subcellular location. In terms of processing, cleaved at acidic pH.

It is found in the virion membrane. The protein resides in the host Golgi apparatus membrane. The protein localises to the host endoplasmic reticulum membrane. Its function is as follows. Forms the spikes present at the surface of the virion together with Glycoprotein C. They are able to attach the virion to a cell receptor and to promote fusion of membranes after endocytosis of the virion. Plays a role in virus binding and/or entry into the vector midgut. Functionally, forms the spikes present at the surface of the virion together with Glycoprotein N. They are able to attach the virion to a cell receptor and to promote fusion of membranes after endocytosis of the virion. Probable class II fusion protein. This is Envelopment polyprotein (GP) from Impatiens necrotic spot virus (INSV).